Reading from the N-terminus, the 458-residue chain is Histone acetyltransferase KAT8 (458 aa).

Composition is skewed to low complexity over residues 1–17 (MAAQGATAAVAATTSGT) and 25–35 (PGENAAVEGPA). The disordered stretch occupies residues 1-52 (MAAQGATAAVAATTSGTVGEGEPGPGENAAVEGPARSPGRVSPPTPARGEPE). Residue Ala2 is modified to N-acetylalanine. Phosphoserine occurs at positions 37 and 42. One can recognise a Tudor-knot domain in the interval 55–110 (VEIGETYLCRRPDSTWHSAEVIQSRVNDQEGREEFYVHYVGFNRRLDEWVDKNRLA). N6-acetyllysine is present on Lys113. A Nuclear localization signal motif is present at residues 140–149 (RNQKRKHDEI). The 274-residue stretch at 174-447 (TKVKYVDKIH…VDSVCLKWAP (274 aa)) folds into the MYST-type HAT domain. Positions 174 to 458 (TKVKYVDKIH…KHKQVKLSKK (285 aa)) are sufficient for interaction with KANSL1. Residues 207-232 (LWLCEYCLKYMKFEKSYRFHLGQCQW) form a C2HC MYST-type zinc finger. Zn(2+) is bound by residues Cys210, Cys213, His226, and Cys230. Lys274 is subject to N6-acetyllysine. Acetyl-CoA-binding residues include Ile317, Thr319, Arg325, Arg326, Gly327, Gly329, and Lys330. Position 348 is a phosphoserine (Ser348). Glu350 serves as the catalytic Proton donor/acceptor. Positions 354, 363, 408, and 432 each coordinate acetyl-CoA.

It belongs to the MYST (SAS/MOZ) family. Component of a multisubunit histone acetyltransferase complex (MSL) at least composed of the MOF/KAT8, MSL1/hampin, MSL2L1 and MSL3L1. Component of the NSL complex at least composed of MOF/KAT8, KANSL1, KANSL2, KANSL3, MCRS1, PHF20, OGT1/OGT, WDR5 and HCFC1. Component of some MLL1/MLL complex, at least composed of the core components KMT2A/MLL1, ASH2L, HCFC1, WDR5 and RBBP5, as well as the facultative components BACC1, CHD8, E2F6, HSP70, INO80C, KANSL1, LAS1L, MAX, MCRS1, MGA, MOF/KAT8, PELP1, PHF20, PRP31, RING2, RUVB1/TIP49A, RUVB2/TIP49B, SENP3, TAF1, TAF4, TAF6, TAF7, TAF9 and TEX10. Interacts with the chromodomain of MORF4L1/MRG15. Interacts with ATM (via its Tudor-knot domain); possibly regulating the activity of ATM. Interacts with NELFD. Acetylation at Lys-274 facilitates cognate substrate Lys-binding and acetylation. Although considered as an autoacetylation event, acetylation at Lys-274 probably takes place via a non-enzymatic process following acetyl-CoA-binding, which primes KAT8 for cognate protein-lysine acetylation. In terms of tissue distribution, during oocyte development, expressed in both oocytes and granulosa cells.

The protein localises to the nucleus. The protein resides in the chromosome. It is found in the mitochondrion. It catalyses the reaction L-lysyl-[histone] + acetyl-CoA = N(6)-acetyl-L-lysyl-[histone] + CoA + H(+). The catalysed reaction is L-lysyl-[protein] + acetyl-CoA = N(6)-acetyl-L-lysyl-[protein] + CoA + H(+). The enzyme catalyses propanoyl-CoA + L-lysyl-[protein] = N(6)-propanoyl-L-lysyl-[protein] + CoA + H(+). With respect to regulation, the acetyltransferase activity is inhibited by anacardic acid derivatives. Its function is as follows. Histone acetyltransferase that catalyzes histone H4 acetylation at 'Lys-5'- and 'Lys-8' (H4K5ac and H4K8ac) or 'Lys-16' (H4K16ac), depending on the context. Catalytic component of the MSL histone acetyltransferase complex, a multiprotein complex that mediates the majority of histone H4 acetylation at 'Lys-16' (H4K16ac), an epigenetic mark that prevents chromatin compaction. H4K16ac constitutes the only acetylation mark intergenerationally transmitted and regulates key biological processes, such as oogenesis, embryonic stem cell pluripotency, hematopoiesis or glucose metabolism. The MSL complex is required for chromosome stability and genome integrity by maintaining homeostatic levels of H4K16ac. The MSL complex is also involved in gene dosage by promoting up-regulation of genes expressed by the X chromosome. X up-regulation is required to compensate for autosomal biallelic expression. The MSL complex also participates in gene dosage compensation by promoting expression of Tsix non-coding RNA. As part of the NSL histone acetyltransferase complex, catalyzes histone H4 acetylation at 'Lys-5'- and 'Lys-8' (H4K5ac and H4K8ac) at transcription start sites and promotes transcription initiation. The NSL complex also acts as a regulator of gene expression in mitochondria: KAT8 associates with mitochondrial DNA and controls expression of respiratory genes in an acetyltransferase-dependent mechanism. Also functions as an acetyltransferase for non-histone targets, such as ALKBH5, COX17, IRF3, KDM1A/LSD1, LMNA, PAX7 or TP53/p53. Acts as an inhibitor of antiviral immunity by acetylating IRF3, preventing IRF3 recruitment to promoters. Acts as a regulator of asymmetric division in muscle stem cells by mediating acetylation of PAX7. As part of the NSL complex, acetylates TP53/p53 at 'Lys-120'. Acts as a regulator of epithelial-to-mesenchymal transition as part of the NSL complex by mediating acetylation of KDM1A/LSD1. The NSL complex is required for nuclear architecture maintenance by mediating acetylation of LMNA. Promotes mitochondrial integrity by catalyzing acetylation of COX17. In addition to protein acetyltransferase activity, able to mediate protein propionylation. This chain is Histone acetyltransferase KAT8, found in Mus musculus (Mouse).